The sequence spans 98 residues: MSSRYLLSPAAQAHLEEIWDCTYDRWGVDQAEQYLRELQHAIDRAAANPRIGRACDEIRPGYRKLSAGSHTLFYRVTGEGTIDVVRVLHQRMDVDRNL.

Belongs to the RelE toxin family.

Functionally, toxic component of a type II toxin-antitoxin (TA) system. Its toxic effect is neutralized by coexpression with cognate antitoxin ParD1. The sequence is that of Toxin ParE1 (parE1) from Mycobacterium tuberculosis (strain CDC 1551 / Oshkosh).